Here is a 174-residue protein sequence, read N- to C-terminus: MMQLMLYASTLITSIILFKMNHPLAMGLMLLIQTIQISMLTGLMAKSFWFSYILFLIFLGGMLVLFIYVTSLASNEMFSLSMKLTTISLFIFSMILIINILLDKSSISFFIQNNEMQSIYNLNMFLQENSLNLQKLYNYPTNLMTILLMNYLLITLIAVVKITKLFYGPLRPMN.

4 consecutive transmembrane segments (helical) span residues 24–44 (LAMG…TGLM), 48–68 (FWFS…LFIY), 82–102 (MKLT…NILL), and 143–163 (LMTI…VKIT).

The protein belongs to the complex I subunit 6 family.

The protein localises to the mitochondrion membrane. The catalysed reaction is a ubiquinone + NADH + 5 H(+)(in) = a ubiquinol + NAD(+) + 4 H(+)(out). Functionally, core subunit of the mitochondrial membrane respiratory chain NADH dehydrogenase (Complex I) that is believed to belong to the minimal assembly required for catalysis. Complex I functions in the transfer of electrons from NADH to the respiratory chain. The immediate electron acceptor for the enzyme is believed to be ubiquinone. The protein is NADH-ubiquinone oxidoreductase chain 6 (ND6) of Ceratitis capitata (Mediterranean fruit fly).